The following is a 278-amino-acid chain: Protein D7 (278 aa).

2 consecutive CHHC U11-48K-type zinc fingers follow at residues 6–33 and 40–67; these read LMQC…RENN and LATC…EYRV. Positions 9, 15, 25, 29, 43, 49, 59, and 63 each coordinate Zn(2+). The segment covering 149-164 has biased composition (polar residues); the sequence is QVKQNQPEPEPFTSSE. 2 disordered regions span residues 149 to 230 and 249 to 278; these read QVKQ…PKAN and PGGS…WVRK. Basic and acidic residues predominate over residues 165-175; it reads RNYDPRSKEPP. Residues 188 to 200 show a composition bias toward polar residues; sequence ATTNTNPWCRQTG. The segment covering 214–225 has biased composition (basic and acidic residues); sequence SSDEGPRNKEFP.

The protein belongs to the UPF0224 (FAM112) family.

It localises to the cytoplasm. Functionally, involved in oocyte maturation. It is possible that D7 is required at a certain point in the maturation process and that maturation cannot proceed beyond this point unless a threshold amount of D7 protein is provided. The polypeptide is Protein D7 (d7) (Xenopus laevis (African clawed frog)).